The primary structure comprises 345 residues: Phenylalanine--tRNA ligase alpha subunit (345 aa).

Residue glutamate 253 participates in Mg(2+) binding.

This sequence belongs to the class-II aminoacyl-tRNA synthetase family. Phe-tRNA synthetase alpha subunit type 1 subfamily. Tetramer of two alpha and two beta subunits. It depends on Mg(2+) as a cofactor.

It is found in the cytoplasm. The enzyme catalyses tRNA(Phe) + L-phenylalanine + ATP = L-phenylalanyl-tRNA(Phe) + AMP + diphosphate + H(+). The polypeptide is Phenylalanine--tRNA ligase alpha subunit (Nitratidesulfovibrio vulgaris (strain DP4) (Desulfovibrio vulgaris)).